A 139-amino-acid chain; its full sequence is Small ribosomal subunit protein bS6 (139 aa).

Positions 95-121 are enriched in basic and acidic residues; that stretch reads AVTEQSEMLKAEESRNERRERRERPND. The tract at residues 95-139 is disordered; it reads AVTEQSEMLKAEESRNERRERRERPNDNAEGADGDDNSDSDNADE. The segment covering 124–139 has biased composition (acidic residues); that stretch reads EGADGDDNSDSDNADE.

It belongs to the bacterial ribosomal protein bS6 family.

Its function is as follows. Binds together with bS18 to 16S ribosomal RNA. The polypeptide is Small ribosomal subunit protein bS6 (Pseudomonas aeruginosa (strain LESB58)).